The chain runs to 454 residues: MSHNDTIVAQATPPGRGGVGILRISGLKARDVAQEVLGKLPKPRYADYLPFKDVDGSALDQGIALWFPGPNSFTGEDVLELQGHGGPVILDLLLKRILTLPGVRIARPGEFSERAFLNDKLDLAQAEAIADLIDASSEQAARSALNSLQGAFSARVNHLVEALTHLRIYVEAAIDFPDEEIDFLSDGKIEAQLNGVIADLDAVRTEARQGSLLREGMKVVIAGRPNAGKSSLLNALAGREAAIVTDIAGTTRDVLREHIHIDGMPLHIIDTAGLRDASDEVERIGIERAWQEIEQADRVLFMVDGTTTDAVDPADIWPDFIARLPKNLPITVVRNKADITGETLGISEVNGHSLVRLSARTGEGIDVLRNHLKQSMGFDTNMEGGFLARRRHLQALAEAAEHLEQGKAQLLGAWAGELLAEELRLAQQSLSEITGEFTSDDLLGRIFSSFCIGK.

Residues R23, E80, and K120 each contribute to the (6S)-5-formyl-5,6,7,8-tetrahydrofolate site. The 162-residue stretch at 216–377 (GMKVVIAGRP…LRNHLKQSMG (162 aa)) folds into the TrmE-type G domain. N226 lines the K(+) pocket. GTP contacts are provided by residues 226–231 (NAGKSS), 245–251 (TDIAGTT), 270–273 (DTAG), 335–338 (NKAD), and 358–360 (SAR). S230 is a binding site for Mg(2+). Residues T245, I247, and T250 each coordinate K(+). T251 serves as a coordination point for Mg(2+). K454 is a binding site for (6S)-5-formyl-5,6,7,8-tetrahydrofolate.

Belongs to the TRAFAC class TrmE-Era-EngA-EngB-Septin-like GTPase superfamily. TrmE GTPase family. In terms of assembly, homodimer. Heterotetramer of two MnmE and two MnmG subunits. The cofactor is K(+).

The protein resides in the cytoplasm. In terms of biological role, exhibits a very high intrinsic GTPase hydrolysis rate. Involved in the addition of a carboxymethylaminomethyl (cmnm) group at the wobble position (U34) of certain tRNAs, forming tRNA-cmnm(5)s(2)U34. In Salmonella typhimurium (strain LT2 / SGSC1412 / ATCC 700720), this protein is tRNA modification GTPase MnmE.